The chain runs to 560 residues: MDVTAIFAGDILVQSREYLIPNDVVDVDGGIKAVRPPIIQPPPGRKLPLIDFPGSSWDFLTYFAPSKTVKRQSSSSSDNTSDKEEVETEETRGMFVQLGDTAHEACPFATNEADSSSTVSIISPSYASRGSIVPSWLKRKFLGRVSLGFVYEGSSGSSVGSESTCSLMTPSLEFPDRISFRKKDFSEKGPSRHVWEKRKLTRAKLIENFCNPEDIEPVTSWLKGQLLGEESFASVYEAISDSSVGSESTCSLMTPSMEFPDRISFRKRDFSEEGPSGRVKEKRKLMRNKLIENFRKPEDITSWLKGQLLGRGSYASVYEAISEDGDFFAVKEVSLLDKGIQAQECIQQLEGEIALLSQLQHQNIVRYRGTAKDVSKLYIFLELVTQGSVQKLYERYQLSYTVVSLYTRQILAGLNYLHDKGFVHRDIKCANMLVDANGTVKLADFGLAEASKFNDIMSCKGTLFWMAPEVINRKDSDGNGSPADIWSLGCTVLEMCTGQIPYSDLKPIQAAFKIGRGTLPDVPDTLSLDARHFILTCLKVNPEERPTAAELLHHPFVINL.

A disordered region spans residues 70-91 (KRQSSSSSDNTSDKEEVETEET). The region spanning 303–557 (WLKGQLLGRG…AAELLHHPFV (255 aa)) is the Protein kinase domain. ATP is bound by residues 309–317 (LGRGSYASV) and K331. The active-site Proton acceptor is D426.

This sequence belongs to the protein kinase superfamily. STE Ser/Thr protein kinase family. MAP kinase kinase kinase subfamily. In terms of tissue distribution, expressed at low levels in roots, stems, siliques, leaves, seedlings and flower buds.

It catalyses the reaction L-seryl-[protein] + ATP = O-phospho-L-seryl-[protein] + ADP + H(+). The enzyme catalyses L-threonyl-[protein] + ATP = O-phospho-L-threonyl-[protein] + ADP + H(+). The polypeptide is Mitogen-activated protein kinase kinase kinase 3 (Arabidopsis thaliana (Mouse-ear cress)).